A 440-amino-acid chain; its full sequence is Thymidine phosphorylase (440 aa).

Belongs to the thymidine/pyrimidine-nucleoside phosphorylase family. Homodimer.

It catalyses the reaction thymidine + phosphate = 2-deoxy-alpha-D-ribose 1-phosphate + thymine. It functions in the pathway pyrimidine metabolism; dTMP biosynthesis via salvage pathway; dTMP from thymine: step 1/2. Its function is as follows. The enzymes which catalyze the reversible phosphorolysis of pyrimidine nucleosides are involved in the degradation of these compounds and in their utilization as carbon and energy sources, or in the rescue of pyrimidine bases for nucleotide synthesis. The polypeptide is Thymidine phosphorylase (Salmonella heidelberg (strain SL476)).